A 121-amino-acid polypeptide reads, in one-letter code: Large ribosomal subunit protein bL31 (121 aa).

A large ribosomal subunit protein bL31 region spans residues 1–97 (MKEGIHPDYK…AKENRAAKRA (97 aa)). Cysteine 16, cysteine 18, cysteine 36, and cysteine 39 together coordinate Zn(2+). Residues 65–80 (ATPAKAEPAKKAPAAE) show a composition bias toward low complexity. The segment at 65–121 (ATPAKAEPAKKAPAAEPAKKVEAAKENRAAKRAKAGKSKKSEAAPAAEAPAADAKPE) is disordered. The tract at residues 74–121 (KKAPAAEPAKKVEAAKENRAAKRAKAGKSKKSEAAPAAEAPAADAKPE) is unknown. Over residues 81–93 (PAKKVEAAKENRA) the composition is skewed to basic and acidic residues. Residues 107–121 (AAPAAEAPAADAKPE) show a composition bias toward low complexity.

Belongs to the bacterial ribosomal protein bL31 family. Type A subfamily. In terms of assembly, part of the 50S ribosomal subunit. Zn(2+) is required as a cofactor.

In terms of biological role, binds the 23S rRNA. The polypeptide is Large ribosomal subunit protein bL31 (Anaeromyxobacter dehalogenans (strain 2CP-C)).